The sequence spans 1503 residues: Dynein axonemal assembly factor 1 homolog (1503 aa).

LRR repeat units lie at residues arginine 34–threonine 56, glutamate 57–glycine 78, lysine 79–arginine 100, glutamate 101–isoleucine 122, valine 125–isoleucine 146, and threonine 150–glutamate 171. Residues proline 185–tryptophan 223 form the LRRCT domain. Disordered regions lie at residues serine 249 to cysteine 280, glutamate 305 to glutamine 328, aspartate 956 to glutamate 1033, and serine 1295 to glutamate 1315. Over residues threonine 973–tyrosine 985 the composition is skewed to acidic residues. A compositionally biased stretch (basic and acidic residues) spans glutamine 1014–histidine 1031. The segment covering threonine 1303–serine 1314 has biased composition (low complexity).

This sequence belongs to the DNAAF1 family.

The protein resides in the cell projection. It is found in the cilium. In terms of biological role, cilium-specific protein required for cilia structures. The polypeptide is Dynein axonemal assembly factor 1 homolog (dtr) (Drosophila erecta (Fruit fly)).